The chain runs to 341 residues: NADH-ubiquinone oxidoreductase chain 2 (341 aa).

8 helical membrane-spanning segments follow: residues 8-28 (IFFI…SWLG), 61-81 (FLTQ…MMMF), 95-117 (LLIL…FPGV), 145-165 (LNIN…ALGG), 195-215 (LLWL…ILMF), 238-258 (FFMF…GFLP), 266-286 (LVEM…LITL), and 320-340 (ILTM…IYLI).

It belongs to the complex I subunit 2 family.

It localises to the mitochondrion inner membrane. It carries out the reaction a ubiquinone + NADH + 5 H(+)(in) = a ubiquinol + NAD(+) + 4 H(+)(out). Functionally, core subunit of the mitochondrial membrane respiratory chain NADH dehydrogenase (Complex I) that is believed to belong to the minimal assembly required for catalysis. Complex I functions in the transfer of electrons from NADH to the respiratory chain. The immediate electron acceptor for the enzyme is believed to be ubiquinone. The protein is NADH-ubiquinone oxidoreductase chain 2 of Aedes aegypti (Yellowfever mosquito).